Reading from the N-terminus, the 354-residue chain is 3'-5' exonuclease (354 aa).

The segment at 1–120 (MEKYLIKMPI…PSPEKEKPEK (120 aa)) is disordered. Composition is skewed to basic and acidic residues over residues 13-23 (KASEVPKDKAV), 36-50 (TKND…KENA), and 71-91 (KNLD…ENPP). 3 positions are modified to phosphoserine: S104, S110, and S112. Residues 146 to 314 (VLQWVEKQKD…GQVIYRELER (169 aa)) form the 3'-5' exonuclease domain. The Mg(2+) site is built by D163, E165, and D301.

This sequence belongs to the WRNexo family.

Its subcellular location is the nucleus. Functionally, has exonuclease activity on both single-stranded and duplex templates bearing overhangs, but not blunt ended duplex DNA, and cleaves in a 3'-5' direction. Essential for the formation of DNA replication focal centers. Has an important role in maintaining genome stability. In Drosophila erecta (Fruit fly), this protein is 3'-5' exonuclease.